Reading from the N-terminus, the 124-residue chain is SETAAEKFERQHMDSYSSSSSNSNYCNQMMKRREMTDGWCKPVNTFIHESLEDVQAVCSQKSVTCKNGQTNCHQSSTTMHITDCRETGSSKYPNCAYKASNLQKHIIIACEGNPYVPVHFDASV.

The segment covering 1-13 (SETAAEKFERQHM) has biased composition (basic and acidic residues). The disordered stretch occupies residues 1–23 (SETAAEKFERQHMDSYSSSSSNS). Substrate-binding residues include K7 and R10. The active-site Proton acceptor is the H12. Disulfide bonds link C26-C84, C40-C95, C58-C110, and C65-C72. Substrate contacts are provided by residues 41 to 45 (KPVNT), K66, and R85. H119 acts as the Proton donor in catalysis.

The protein belongs to the pancreatic ribonuclease family. In terms of assembly, monomer. Interacts with and forms tight 1:1 complexes with RNH1. Dimerization of two such complexes may occur. Interaction with RNH1 inhibits this protein. Pancreas.

The protein localises to the secreted. The enzyme catalyses an [RNA] containing cytidine + H2O = an [RNA]-3'-cytidine-3'-phosphate + a 5'-hydroxy-ribonucleotide-3'-[RNA].. It catalyses the reaction an [RNA] containing uridine + H2O = an [RNA]-3'-uridine-3'-phosphate + a 5'-hydroxy-ribonucleotide-3'-[RNA].. Its function is as follows. Endonuclease that catalyzes the cleavage of RNA on the 3' side of pyrimidine nucleotides. Acts on single-stranded and double-stranded RNA. The chain is Ribonuclease pancreatic (RNASE1) from Camelus bactrianus (Bactrian camel).